The sequence spans 152 residues: Snaclec coagulation factor IX/factor X-binding protein subunit A (152 aa).

The signal sequence occupies residues 1–23 (MGRFIFVSFGLLVVAASLSGTGA). 3 disulfide bridges follow: Cys25–Cys36, Cys53–Cys150, and Cys125–Cys142. The C-type lectin domain occupies 32–151 (YEGHCYKAFE…CGQRIPFVCE (120 aa)). The Ca(2+) site is built by Ser64, Glu66, and Glu70. Glu151 is a binding site for Ca(2+).

The protein belongs to the snaclec family. In terms of assembly, heterodimer of subunits A and B; disulfide-linked. In terms of tissue distribution, expressed by the venom gland.

It is found in the secreted. Functionally, anticoagulant protein which binds to the gamma-carboxyglutamic acid-domain regions of factors IX (F9) and factor X (F10) in the presence of calcium with a 1 to 1 stoichiometry. In Trimeresurus stejnegeri (Chinese green tree viper), this protein is Snaclec coagulation factor IX/factor X-binding protein subunit A.